We begin with the raw amino-acid sequence, 1616 residues long: Putative inactive phenolphthiocerol synthesis polyketide synthase type I Pks1 (1616 aa).

The tract at residues 83 to 397 (TVVVFPGQGA…GQVFTTGVPV (315 aa)) is acyltransferase. The active-site For acyltransferase activity is the S174. The N-terminal hotdog fold stretch occupies residues 445 to 567 (HALLGAVVER…GMLGVAAAET (123 aa)). Positions 445 to 605 (HALLGAVVER…YAYGPAFQGL (161 aa)) are dehydratase. Residues 445–719 (HALLGAVVER…TRPITAEQLR (275 aa)) form the PKS/mFAS DH domain. H477 functions as the Proton acceptor; for dehydratase activity in the catalytic mechanism. Positions 579 to 719 (AESVDISDGY…TRPITAEQLR (141 aa)) are C-terminal hotdog fold. Catalysis depends on D640, which acts as the Proton donor; for dehydratase activity. Residues 910 to 1215 (GTLEDLVIQP…QARHIGKVVL (306 aa)) form an enoylreductase region. Residues 1040–1057 (VLIH…VQLA) and 1229–1244 (TVVI…GVLA) contribute to the NADP(+) site. The interval 1228-1409 (GTVVITGATG…SLAWGLWEQP (182 aa)) is beta-ketoacyl reductase. The region spanning 1514-1589 (ELLVGLVCLQ…AVAEYVAQQM (76 aa)) is the Carrier domain. At S1549 the chain carries O-(pantetheine 4'-phosphoryl)serine. Positions 1588 to 1604 (QMSGSRPTESGDPTSQV) are enriched in polar residues. Residues 1588–1616 (QMSGSRPTESGDPTSQVVEPAAAEVSVHA) are disordered.

Pantetheine 4'-phosphate is required as a cofactor.

The protein operates within lipid metabolism; fatty acid biosynthesis. Functionally, may play a role in phthiocerol biosynthesis. This is Putative inactive phenolphthiocerol synthesis polyketide synthase type I Pks1 (pks1) from Mycobacterium tuberculosis (strain ATCC 25618 / H37Rv).